Reading from the N-terminus, the 314-residue chain is Hydroxyacyl-coenzyme A dehydrogenase, mitochondrial (314 aa).

The N-terminal 12 residues, 1–12 (MAFATRQLVRSL), are a transit peptide targeting the mitochondrion. Residues 34–39 (GGGLMG) and Asp57 each bind NAD(+). Residues Ser73 and Lys80 each contribute to the CoA site. The residue at position 80 (Lys80) is an N6-succinyllysine. N6-acetyllysine; alternate occurs at positions 81 and 87. 2 positions are modified to N6-succinyllysine; alternate: Lys81 and Lys87. Glu122 is an NAD(+) binding site. Position 125 is an N6-acetyllysine (Lys125). Residue Lys127 participates in NAD(+) binding. Lys127 bears the N6-(2-hydroxyisobutyryl)lysine mark. Lys136 carries the post-translational modification N6-acetyllysine; alternate. Lys136 carries the post-translational modification N6-succinyllysine; alternate. The NAD(+) site is built by Ser149 and Asn173. CoA is bound at residue Ser149. Lys179 carries the post-translational modification N6-acetyllysine. Lys185, Lys192, and Lys202 each carry N6-acetyllysine; alternate. An N6-succinyllysine; alternate mark is found at Lys185, Lys192, and Lys202. The residue at position 206 (Lys206) is an N6-succinyllysine. An N6-acetyllysine; alternate mark is found at Lys212 and Lys241. Lys212 and Lys241 each carry N6-succinyllysine; alternate. Position 305 (Lys305) interacts with NAD(+). An N6-acetyllysine; alternate modification is found at Lys312. At Lys312 the chain carries N6-succinyllysine; alternate.

It belongs to the 3-hydroxyacyl-CoA dehydrogenase family. In terms of assembly, homodimer. Interacts with GLUD1; this interaction inhibits the activation of glutamate dehydrogenase 1 (GLUD1). In terms of processing, succinylation at Lys-81, adjacent to a coenzyme A binding site. Desuccinylated by SIRT5.

Its subcellular location is the mitochondrion matrix. The enzyme catalyses a (3S)-3-hydroxyacyl-CoA + NAD(+) = a 3-oxoacyl-CoA + NADH + H(+). It carries out the reaction (3S)-3-hydroxybutanoyl-CoA + NAD(+) = acetoacetyl-CoA + NADH + H(+). The catalysed reaction is (3S)-hydroxydecanoyl-CoA + NAD(+) = 3-oxodecanoyl-CoA + NADH + H(+). It catalyses the reaction (3S)-hydroxyhexadecanoyl-CoA + NAD(+) = 3-oxohexadecanoyl-CoA + NADH + H(+). Its pathway is lipid metabolism; fatty acid beta-oxidation. In terms of biological role, mitochondrial fatty acid beta-oxidation enzyme that catalyzes the third step of the beta-oxidation cycle for medium and short-chain 3-hydroxy fatty acyl-CoAs (C4 to C10). Plays a role in the control of insulin secretion by inhibiting the activation of glutamate dehydrogenase 1 (GLUD1), an enzyme that has an important role in regulating amino acid-induced insulin secretion. Plays a role in the maintenance of normal spermatogenesis through the reduction of fatty acid accumulation in the testes. The chain is Hydroxyacyl-coenzyme A dehydrogenase, mitochondrial (HADH) from Sus scrofa (Pig).